Reading from the N-terminus, the 367-residue chain is Beta sliding clamp (367 aa).

It belongs to the beta sliding clamp family. Forms a ring-shaped head-to-tail homodimer around DNA which binds and tethers DNA polymerases and other proteins to the DNA. The DNA replisome complex has a single clamp-loading complex (3 tau and 1 each of delta, delta', psi and chi subunits) which binds 3 Pol III cores (1 core on the leading strand and 2 on the lagging strand) each with a beta sliding clamp dimer. Additional proteins in the replisome are other copies of gamma, psi and chi, Ssb, DNA helicase and RNA primase.

The protein resides in the cytoplasm. Its function is as follows. Confers DNA tethering and processivity to DNA polymerases and other proteins. Acts as a clamp, forming a ring around DNA (a reaction catalyzed by the clamp-loading complex) which diffuses in an ATP-independent manner freely and bidirectionally along dsDNA. Initially characterized for its ability to contact the catalytic subunit of DNA polymerase III (Pol III), a complex, multichain enzyme responsible for most of the replicative synthesis in bacteria; Pol III exhibits 3'-5' exonuclease proofreading activity. The beta chain is required for initiation of replication as well as for processivity of DNA replication. In Proteus mirabilis, this protein is Beta sliding clamp (dnaN).